The chain runs to 122 residues: Large ribosomal subunit protein uL14c (122 aa).

The protein belongs to the universal ribosomal protein uL14 family. As to quaternary structure, part of the 50S ribosomal subunit.

Its subcellular location is the plastid. Its function is as follows. Binds to 23S rRNA. The chain is Large ribosomal subunit protein uL14c from Cuscuta exaltata (Tall dodder).